A 488-amino-acid polypeptide reads, in one-letter code: Cobyric acid synthase (488 aa).

The GATase cobBQ-type domain occupies 250-438 (DITIAIIRLP…LHGIFDNGSW (189 aa)). The Nucleophile role is filled by Cys331. His430 is an active-site residue.

This sequence belongs to the CobB/CobQ family. CobQ subfamily.

It participates in cofactor biosynthesis; adenosylcobalamin biosynthesis. Its function is as follows. Catalyzes amidations at positions B, D, E, and G on adenosylcobyrinic A,C-diamide. NH(2) groups are provided by glutamine, and one molecule of ATP is hydrogenolyzed for each amidation. In Trichodesmium erythraeum (strain IMS101), this protein is Cobyric acid synthase.